The chain runs to 100 residues: Small ribosomal subunit protein uS14c (100 aa).

The protein belongs to the universal ribosomal protein uS14 family. In terms of assembly, part of the 30S ribosomal subunit.

The protein localises to the plastid. In terms of biological role, binds 16S rRNA, required for the assembly of 30S particles. In Cuscuta exaltata (Tall dodder), this protein is Small ribosomal subunit protein uS14c.